A 152-amino-acid chain; its full sequence is Mitochondrial holo-[acyl-carrier-protein] synthase (152 aa).

It belongs to the P-Pant transferase superfamily. AcpS family.

The protein localises to the mitochondrion. It catalyses the reaction apo-[ACP] + CoA = holo-[ACP] + adenosine 3',5'-bisphosphate + H(+). Functionally, transfers the 4'-phosphopantetheine moiety from coenzyme A to a Ser of mitochondrial acyl-carrier-protein. This chain is Mitochondrial holo-[acyl-carrier-protein] synthase (PPT2), found in Candida glabrata (strain ATCC 2001 / BCRC 20586 / JCM 3761 / NBRC 0622 / NRRL Y-65 / CBS 138) (Yeast).